The sequence spans 214 residues: Large ribosomal subunit protein uL16-like (214 aa).

This sequence belongs to the universal ribosomal protein uL16 family. In terms of assembly, component of the 60S large ribosomal subunit (LSU).

It localises to the cytoplasm. In terms of biological role, testis-specific component of the ribosome, which is required for the transition from prophase to metaphase in male meiosis I. Compensates for the inactivated X-linked RPL10 paralog during spermatogenesis. The ribosome is a large ribonucleoprotein complex responsible for the synthesis of proteins in the cell. The small ribosomal subunit (SSU) binds messenger RNAs (mRNAs) and translates the encoded message by selecting cognate aminoacyl-transfer RNA (tRNA) molecules. The large subunit (LSU) contains the ribosomal catalytic site termed the peptidyl transferase center (PTC), which catalyzes the formation of peptide bonds, thereby polymerizing the amino acids delivered by tRNAs into a polypeptide chain. The nascent polypeptides leave the ribosome through a tunnel in the LSU and interact with protein factors that function in enzymatic processing, targeting, and the membrane insertion of nascent chains at the exit of the ribosomal tunnel. The protein is Large ribosomal subunit protein uL16-like (RPL10L) of Macaca fascicularis (Crab-eating macaque).